A 65-amino-acid chain; its full sequence is Alpha-conotoxin Mr1.1 (65 aa).

An N-terminal signal peptide occupies residues 1-21 (MGMRMMFTVFLLVVLATTVVS). Positions 22–48 (FTSDRASDGRKAAAKDKASDLVALTVK) are excised as a propeptide. 2 disulfides stabilise this stretch: Cys-50-Cys-56 and Cys-51-Cys-64. Positions 52–54 (SHP) are ser-Xaa-Pro motif, crucial for potent interaction with nAChR. Cys-64 is subject to Cysteine amide.

Belongs to the conotoxin A superfamily. As to expression, expressed by the venom duct.

The protein localises to the secreted. In terms of biological role, alpha-conotoxins act on postsynaptic membranes, they bind to the nicotinic acetylcholine receptors (nAChR) and thus inhibit them. This toxin potently and reversibly inhibits alpha-9-alpha-10/CHRNA9-CHRNA10 (IC(50)=92 nM (human) and IC(50)=8.3 nM (rat)) and human alpha3-beta-2/CHRNA3-CHRNB2 nAChR (IC(50)=218.9 nM). Also moderately inhibits human alpha-3-beta-4/CHRNA3-CHRNB4 (60% inhibition at 1 uM), rat alpha-7/CHRNA7 (65% inhibition at 1 uM) and rat alpha-3-beta-2/CHRNA3-CHRNB2 nAChR (50-70% inhibition at 10 uM). In two rat pain models, this toxin shows analgesic effect. The sequence is that of Alpha-conotoxin Mr1.1 from Conus marmoreus (Marble cone).